The sequence spans 809 residues: Chloride channel protein F (809 aa).

Over 1–65 the chain is Cytoplasmic; sequence MSTSKYSKMI…SWAKFARLNN (65 aa). The next 11 membrane-spanning stretches (helical) occupy residues 66–86, 110–130, 152–172, 218–238, 246–266, 295–315, 333–353, 395–415, 425–445, 459–479, and 486–506; these read FYIW…LVAV, LQYL…CFII, FWNP…GLLL, AACC…GVLF, FYLI…AVGI, LIAF…FISL, ITPF…SFPL, GIIL…AVSI, IPLF…MLVL, VVGA…AMII, and LTYM…GNLL. Positions 539-597 constitute a CBS 1 domain; the sequence is MKRDLYYVCQNTTLSQISNLLKRVDEHSIPVVSSDNDLQLIGTISTTTLEEVIAYHERL. Disordered stretches follow at residues 604–646 and 692–729; these read PLSL…NNQN and NNNF…NNNS. Residues 620 to 646 are compositionally biased toward low complexity; it reads NDNINNNQNNNNNNNNNNNNNNSNNQN. The region spanning 756–809 is the CBS 2 domain; it reads IDSSPFQIQETMPVRKIVFMFMMLGGNILYVTNKGKLTGVVAKTELVHQNNNKH.

It belongs to the chloride channel (TC 2.A.49) family.

It localises to the membrane. Functionally, voltage-gated chloride channel. Chloride channels may have several functions including the regulation of cell volume, membrane potential stabilization and signal transduction. The sequence is that of Chloride channel protein F (clcF) from Dictyostelium discoideum (Social amoeba).